A 621-amino-acid polypeptide reads, in one-letter code: DNA-directed RNA polymerase subunit gamma (621 aa).

The Mg(2+) site is built by Asp-463, Asp-465, and Asp-467.

Belongs to the RNA polymerase beta' chain family. RpoC1 subfamily. In terms of assembly, in cyanobacteria the RNAP catalytic core is composed of 2 alpha, 1 beta, 1 beta', 1 gamma and 1 omega subunit. When a sigma factor is associated with the core the holoenzyme is formed, which can initiate transcription. Requires Mg(2+) as cofactor.

The enzyme catalyses RNA(n) + a ribonucleoside 5'-triphosphate = RNA(n+1) + diphosphate. Functionally, DNA-dependent RNA polymerase catalyzes the transcription of DNA into RNA using the four ribonucleoside triphosphates as substrates. This chain is DNA-directed RNA polymerase subunit gamma, found in Nostoc commune.